A 1770-amino-acid polypeptide reads, in one-letter code: Transposon Ty2-DR2 Gag-Pol polyprotein (1770 aa).

2 stretches are compositionally biased toward polar residues: residues 1–39 (MESQ…SASN) and 49–60 (KVNSQEETTPGT). Disordered stretches follow at residues 1–89 (MESQ…QQHG) and 360–449 (HSEY…SNDE). The tract at residues 295 to 397 (ENNINVSDRL…SSKPRAAKAH (103 aa)) is RNA-binding. The span at 369-381 (TSPNTTNTKVTTR) shows a compositional bias: low complexity. 2 stretches are compositionally biased toward polar residues: residues 399–408 (IATSSKFSRV) and 415–435 (ESTV…GQQQ). The active-site For protease activity; shared with dimeric partner is aspartate 457. The segment at 579–636 (NVNKSKSVNKYPYPLIHRMLGHANFRSIQKSLKKNAVTYLKESDIEWSNASTYQCPDC) is integrase-type zinc finger-like. Positions 656-831 (ESYEPFQYLH…AGLDITTILP (176 aa)) constitute an Integrase catalytic domain. Mg(2+)-binding residues include aspartate 667 and aspartate 732. Disordered regions lie at residues 1005–1038 (GGTI…MIDL), 1059–1135 (TEEP…KSSK), and 1171–1222 (SRQT…LEPP). 2 stretches are compositionally biased toward polar residues: residues 1009–1024 (ESDT…FTAR) and 1065–1082 (QRNS…STPS). The Bipartite nuclear localization signal motif lies at 1193–1227 (KKRSLEDNETEIEVSRDTWNNKNMRSLEPPRSKKR). Positions 1353-1491 (NDYYITQLDI…DILGLEIKYQ (139 aa)) constitute a Reverse transcriptase Ty1/copia-type domain. Residues aspartate 1361, aspartate 1442, aspartate 1443, aspartate 1625, glutamate 1667, and aspartate 1700 each coordinate Mg(2+). Residues 1625-1767 (DASYGNQPYY…IKTFKLLTNK (143 aa)) enclose the RNase H Ty1/copia-type domain.

In terms of assembly, the capsid protein forms a homotrimer, from which the VLPs are assembled. The protease is a homodimer, whose active site consists of two apposed aspartic acid residues. Post-translationally, initially, virus-like particles (VLPs) are composed of the structural unprocessed proteins Gag and Gag-Pol, and also contain the host initiator methionine tRNA (tRNA(i)-Met) which serves as a primer for minus-strand DNA synthesis, and a dimer of genomic Ty RNA. Processing of the polyproteins occurs within the particle and proceeds by an ordered pathway, called maturation. First, the protease (PR) is released by autocatalytic cleavage of the Gag-Pol polyprotein, and this cleavage is a prerequisite for subsequent processing at the remaining sites to release the mature structural and catalytic proteins. Maturation takes place prior to the RT reaction and is required to produce transposition-competent VLPs.

Its subcellular location is the cytoplasm. It is found in the nucleus. The enzyme catalyses DNA(n) + a 2'-deoxyribonucleoside 5'-triphosphate = DNA(n+1) + diphosphate. The catalysed reaction is Endonucleolytic cleavage to 5'-phosphomonoester.. Functionally, capsid protein (CA) is the structural component of the virus-like particle (VLP), forming the shell that encapsulates the retrotransposons dimeric RNA genome. The particles are assembled from trimer-clustered units and there are holes in the capsid shells that allow for the diffusion of macromolecules. CA also has nucleocapsid-like chaperone activity, promoting primer tRNA(i)-Met annealing to the multipartite primer-binding site (PBS), dimerization of Ty2 RNA and initiation of reverse transcription. The aspartyl protease (PR) mediates the proteolytic cleavages of the Gag and Gag-Pol polyproteins after assembly of the VLP. In terms of biological role, reverse transcriptase/ribonuclease H (RT) is a multifunctional enzyme that catalyzes the conversion of the retro-elements RNA genome into dsDNA within the VLP. The enzyme displays a DNA polymerase activity that can copy either DNA or RNA templates, and a ribonuclease H (RNase H) activity that cleaves the RNA strand of RNA-DNA heteroduplexes during plus-strand synthesis and hydrolyzes RNA primers. The conversion leads to a linear dsDNA copy of the retrotransposon that includes long terminal repeats (LTRs) at both ends. Its function is as follows. Integrase (IN) targets the VLP to the nucleus, where a subparticle preintegration complex (PIC) containing at least integrase and the newly synthesized dsDNA copy of the retrotransposon must transit the nuclear membrane. Once in the nucleus, integrase performs the integration of the dsDNA into the host genome. This Saccharomyces cerevisiae (strain ATCC 204508 / S288c) (Baker's yeast) protein is Transposon Ty2-DR2 Gag-Pol polyprotein (TY2B-DR2).